The chain runs to 127 residues: Glycine cleavage system H protein (127 aa).

The 82-residue stretch at 24 to 105 folds into the Lipoyl-binding domain; sequence TVKVGISDHA…PYEAWLFAVR (82 aa). At K65 the chain carries N6-lipoyllysine.

This sequence belongs to the GcvH family. As to quaternary structure, the glycine cleavage system is composed of four proteins: P, T, L and H. (R)-lipoate is required as a cofactor.

In terms of biological role, the glycine cleavage system catalyzes the degradation of glycine. The H protein shuttles the methylamine group of glycine from the P protein to the T protein. This Methylococcus capsulatus (strain ATCC 33009 / NCIMB 11132 / Bath) protein is Glycine cleavage system H protein.